We begin with the raw amino-acid sequence, 83 residues long: Cytochrome c-554(548) (83 aa).

Positions 14, 17, 18, and 63 each coordinate heme c.

Homodimer. Post-translationally, binds 1 heme c group covalently per subunit.

In Halomonas halodenitrificans (strain ATCC 12084 / NCIMB 8669) (Paracoccus halodenitrificans), this protein is Cytochrome c-554(548).